The sequence spans 362 residues: Protein RecA (362 aa).

Position 67 to 74 (67 to 74 (GPESSGKT)) interacts with ATP. The segment covering 337–356 (VADAPADSAPAPVAAVAPKA) has biased composition (low complexity). Residues 337 to 362 (VADAPADSAPAPVAAVAPKASARKSA) form a disordered region.

It belongs to the RecA family.

Its subcellular location is the cytoplasm. In terms of biological role, can catalyze the hydrolysis of ATP in the presence of single-stranded DNA, the ATP-dependent uptake of single-stranded DNA by duplex DNA, and the ATP-dependent hybridization of homologous single-stranded DNAs. It interacts with LexA causing its activation and leading to its autocatalytic cleavage. The chain is Protein RecA from Clavibacter michiganensis subsp. michiganensis (strain NCPPB 382).